The following is a 214-amino-acid chain: uncharacterized protein (214 aa).

2 consecutive CBS domains span residues 7 to 65 (MDKN…KKPI) and 69 to 129 (MRPV…EIPV).

This is an uncharacterized protein from Methanocaldococcus jannaschii (strain ATCC 43067 / DSM 2661 / JAL-1 / JCM 10045 / NBRC 100440) (Methanococcus jannaschii).